We begin with the raw amino-acid sequence, 469 residues long: ATP sulfurylase 4, chloroplastic (469 aa).

Residues 1 to 51 (MASSAAAIVSGSPFRSSPLIHNHHASRYAPGSISVVSLPRQVSRRGLSVKS) constitute a chloroplast transit peptide.

The protein belongs to the sulfate adenylyltransferase family. Homotetramer. In terms of tissue distribution, expressed in roots and leaves.

It localises to the plastid. The protein localises to the chloroplast stroma. The enzyme catalyses sulfate + ATP + H(+) = adenosine 5'-phosphosulfate + diphosphate. The protein operates within sulfur metabolism; hydrogen sulfide biosynthesis; sulfite from sulfate: step 1/3. In terms of biological role, sulfate adenylyltransferase. Catalyzes the first step of the sulfate assimilation pathway. This is ATP sulfurylase 4, chloroplastic (APS4) from Arabidopsis thaliana (Mouse-ear cress).